The chain runs to 114 residues: MNVRANRVSEQMKKELGDILNRKIKDPRLGFVTVTGVDVTGDLQEAKVFISILGTDKEKENTLLALAKAHGFIRSEIGRRIRLRKVPEMSFEIDNSIAYGNRIDELLRDLNSDQ.

Belongs to the RbfA family. Monomer. Binds 30S ribosomal subunits, but not 50S ribosomal subunits or 70S ribosomes.

It is found in the cytoplasm. Its function is as follows. One of several proteins that assist in the late maturation steps of the functional core of the 30S ribosomal subunit. Associates with free 30S ribosomal subunits (but not with 30S subunits that are part of 70S ribosomes or polysomes). Required for efficient processing of 16S rRNA. May interact with the 5'-terminal helix region of 16S rRNA. The polypeptide is Ribosome-binding factor A (Listeria welshimeri serovar 6b (strain ATCC 35897 / DSM 20650 / CCUG 15529 / CIP 8149 / NCTC 11857 / SLCC 5334 / V8)).